The chain runs to 360 residues: Mitogen-activated protein kinase 14 (360 aa).

Ser-2 is modified (N-acetylserine). Phosphoserine is present on Ser-2. At Thr-16 the chain carries Phosphothreonine. The region spanning 24 to 308 (YQNLSPVGSG…AAQALAHAYF (285 aa)) is the Protein kinase domain. ATP-binding positions include 30–38 (VGSGAYGSV) and Lys-53. Lys-53 is modified (N6-acetyllysine). Residue Asp-150 is the Proton acceptor of the active site. Position 152 is an N6-acetyllysine (Lys-152). Thr-180 is modified (phosphothreonine). Residues 180–182 (TGY) carry the TXY motif. Tyr-182 carries the phosphotyrosine modification. Residue Tyr-323 is modified to Phosphotyrosine; by ZAP70.

This sequence belongs to the protein kinase superfamily. CMGC Ser/Thr protein kinase family. MAP kinase subfamily. Component of a signaling complex containing at least AKAP13, PKN1, MAPK14, ZAK and MAP2K3. Within this complex, AKAP13 interacts directly with PKN1, which in turn recruits MAPK14, MAP2K3 and ZAK. Binds to a kinase interaction motif within the protein tyrosine phosphatase, PTPRR. This interaction retains MAPK14 in the cytoplasm and prevents nuclear accumulation. Interacts with SPAG9 and GADD45A. Interacts with CDC25B, CDC25C, DUSP1, DUSP10, DUSP16, NP60, SUPT20H and TAB1. Interacts with casein kinase II subunits CSNK2A1 and CSNK2B. Interacts with PPM1D. Interacts with CDK5RAP3; recruits PPM1D to MAPK14 and may regulate its dephosphorylation. Interacts with DUSP2; this interaction does not lead to catalytic activation of DUSP2 and dephosphrylation of MAPK14. The cofactor is Mg(2+). Dually phosphorylated on Thr-180 and Tyr-182 by the MAP2Ks MAP2K3/MKK3, MAP2K4/MKK4 and MAP2K6/MKK6 in response to inflammatory cytokines, environmental stress or growth factors, which activates the enzyme. Dual phosphorylation can also be mediated by TAB1-mediated autophosphorylation. TCR engagement in T-cells also leads to Tyr-323 phosphorylation by ZAP70. Dephosphorylated and inactivated by DUPS1, DUSP10 and DUSP16. PPM1D also mediates dephosphorylation and inactivation of MAPK14. In terms of processing, acetylated at Lys-53 and Lys-152 by KAT2B and EP300. Acetylation at Lys-53 increases the affinity for ATP and enhances kinase activity. Lys-53 and Lys-152 are deacetylated by HDAC3. Post-translationally, ubiquitinated. Ubiquitination leads to degradation by the proteasome pathway.

The protein localises to the cytoplasm. It is found in the nucleus. It carries out the reaction L-seryl-[protein] + ATP = O-phospho-L-seryl-[protein] + ADP + H(+). The catalysed reaction is L-threonyl-[protein] + ATP = O-phospho-L-threonyl-[protein] + ADP + H(+). Its activity is regulated as follows. Activated by cell stresses such as DNA damage, heat shock, osmotic shock, anisomycin and sodium arsenite, as well as pro-inflammatory stimuli such as bacterial lipopolysaccharide (LPS) and interleukin-1. Activation occurs through dual phosphorylation of Thr-180 and Tyr-182 by either of two dual specificity kinases, MAP2K3/MKK3 or MAP2K6/MKK6, and potentially also MAP2K4/MKK4, as well as by TAB1-mediated autophosphorylation. MAPK14 phosphorylated on both Thr-180 and Tyr-182 is 10-20-fold more active than MAPK14 phosphorylated only on Thr-180, whereas MAPK14 phosphorylated on Tyr-182 alone is inactive. whereas Thr-180 is necessary for catalysis, Tyr-182 may be required for auto-activation and substrate recognition. Phosphorylated at Tyr-323 by ZAP70 in an alternative activation pathway in response to TCR signaling in T-cells. This alternative pathway is inhibited by GADD45A. Inhibited by dual specificity phosphatases, such as DUSP1, DUSP10, and DUSP16. Specifically inhibited by the binding of pyridinyl-imidazole compounds, which are cytokine-suppressive anti-inflammatory drugs (CSAID). SB203580 is an inhibitor of MAPK14. In terms of biological role, serine/threonine kinase which acts as an essential component of the MAP kinase signal transduction pathway. MAPK14 is one of the four p38 MAPKs which play an important role in the cascades of cellular responses evoked by extracellular stimuli such as pro-inflammatory cytokines or physical stress leading to direct activation of transcription factors. Accordingly, p38 MAPKs phosphorylate a broad range of proteins and it has been estimated that they may have approximately 200 to 300 substrates each. Some of the targets are downstream kinases which are activated through phosphorylation and further phosphorylate additional targets. RPS6KA5/MSK1 and RPS6KA4/MSK2 can directly phosphorylate and activate transcription factors such as CREB1, ATF1, the NF-kappa-B isoform RELA/NFKB3, STAT1 and STAT3, but can also phosphorylate histone H3 and the nucleosomal protein HMGN1. RPS6KA5/MSK1 and RPS6KA4/MSK2 play important roles in the rapid induction of immediate-early genes in response to stress or mitogenic stimuli, either by inducing chromatin remodeling or by recruiting the transcription machinery. On the other hand, two other kinase targets, MAPKAPK2/MK2 and MAPKAPK3/MK3, participate in the control of gene expression mostly at the post-transcriptional level, by phosphorylating ZFP36 (tristetraprolin) and ELAVL1, and by regulating EEF2K, which is important for the elongation of mRNA during translation. MKNK1/MNK1 and MKNK2/MNK2, two other kinases activated by p38 MAPKs, regulate protein synthesis by phosphorylating the initiation factor EIF4E2. MAPK14 also interacts with casein kinase II, leading to its activation through autophosphorylation and further phosphorylation of TP53/p53. In the cytoplasm, the p38 MAPK pathway is an important regulator of protein turnover. For example, CFLAR is an inhibitor of TNF-induced apoptosis whose proteasome-mediated degradation is regulated by p38 MAPK phosphorylation. In a similar way, MAPK14 phosphorylates the ubiquitin ligase SIAH2, regulating its activity towards EGLN3. MAPK14 may also inhibit the lysosomal degradation pathway of autophagy by interfering with the intracellular trafficking of the transmembrane protein ATG9. Another function of MAPK14 is to regulate the endocytosis of membrane receptors by different mechanisms that impinge on the small GTPase RAB5A. In addition, clathrin-mediated EGFR internalization induced by inflammatory cytokines and UV irradiation depends on MAPK14-mediated phosphorylation of EGFR itself as well as of RAB5A effectors. Ectodomain shedding of transmembrane proteins is regulated by p38 MAPKs as well. In response to inflammatory stimuli, p38 MAPKs phosphorylate the membrane-associated metalloprotease ADAM17. Such phosphorylation is required for ADAM17-mediated ectodomain shedding of TGF-alpha family ligands, which results in the activation of EGFR signaling and cell proliferation. Another p38 MAPK substrate is FGFR1. FGFR1 can be translocated from the extracellular space into the cytosol and nucleus of target cells, and regulates processes such as rRNA synthesis and cell growth. FGFR1 translocation requires p38 MAPK activation. In the nucleus, many transcription factors are phosphorylated and activated by p38 MAPKs in response to different stimuli. Classical examples include ATF1, ATF2, ATF6, ELK1, PTPRH, DDIT3, TP53/p53 and MEF2C and MEF2A. The p38 MAPKs are emerging as important modulators of gene expression by regulating chromatin modifiers and remodelers. The promoters of several genes involved in the inflammatory response, such as IL6, IL8 and IL12B, display a p38 MAPK-dependent enrichment of histone H3 phosphorylation on 'Ser-10' (H3S10ph) in LPS-stimulated myeloid cells. This phosphorylation enhances the accessibility of the cryptic NF-kappa-B-binding sites marking promoters for increased NF-kappa-B recruitment. Phosphorylates CDC25B and CDC25C which is required for binding to 14-3-3 proteins and leads to initiation of a G2 delay after ultraviolet radiation. Phosphorylates TIAR following DNA damage, releasing TIAR from GADD45A mRNA and preventing mRNA degradation. The p38 MAPKs may also have kinase-independent roles, which are thought to be due to the binding to targets in the absence of phosphorylation. Protein O-Glc-N-acylation catalyzed by the OGT is regulated by MAPK14, and, although OGT does not seem to be phosphorylated by MAPK14, their interaction increases upon MAPK14 activation induced by glucose deprivation. This interaction may regulate OGT activity by recruiting it to specific targets such as neurofilament H, stimulating its O-Glc-N-acylation. Required in mid-fetal development for the growth of embryo-derived blood vessels in the labyrinth layer of the placenta. Also plays an essential role in developmental and stress-induced erythropoiesis, through regulation of EPO gene expression. Phosphorylates S100A9 at 'Thr-113'. This chain is Mitogen-activated protein kinase 14, found in Rattus norvegicus (Rat).